The following is a 509-amino-acid chain: Histidine--tRNA ligase, cytoplasmic (509 aa).

Ala-2 is modified (N-acetylalanine). One can recognise a WHEP-TRS domain in the interval 3 to 59 (ERAALEELVKLQGERVRGLKQQKASAELIEEEVAKLLKLKAQLGPDESKQKFVLKTP). Ser-66 carries the phosphoserine modification. Residues 130–132 (DLT), Arg-157, Gln-173, Asp-177, Arg-326, and 330–331 (YY) contribute to the L-histidine site. Residue Ser-356 is modified to Phosphoserine.

Belongs to the class-II aminoacyl-tRNA synthetase family. In terms of assembly, homodimer. Brain, heart, liver and kidney.

The protein localises to the cytoplasm. It carries out the reaction tRNA(His) + L-histidine + ATP = L-histidyl-tRNA(His) + AMP + diphosphate + H(+). In terms of biological role, catalyzes the ATP-dependent ligation of histidine to the 3'-end of its cognate tRNA, via the formation of an aminoacyl-adenylate intermediate (His-AMP). Plays a role in axon guidance. The protein is Histidine--tRNA ligase, cytoplasmic of Homo sapiens (Human).